The primary structure comprises 334 residues: Ornithine carbamoyltransferase (334 aa).

Residues 57 to 60, Gln84, Arg108, and 135 to 138 contribute to the carbamoyl phosphate site; these read STRT and HPTQ. Residues Asn169, Asp233, and 237-238 contribute to the L-ornithine site; that span reads SM. Residues 275 to 276 and Arg320 each bind carbamoyl phosphate; that span reads CL.

The protein belongs to the aspartate/ornithine carbamoyltransferase superfamily. OTCase family.

The protein resides in the cytoplasm. The catalysed reaction is carbamoyl phosphate + L-ornithine = L-citrulline + phosphate + H(+). Its pathway is amino-acid biosynthesis; L-arginine biosynthesis; L-arginine from L-ornithine and carbamoyl phosphate: step 1/3. Reversibly catalyzes the transfer of the carbamoyl group from carbamoyl phosphate (CP) to the N(epsilon) atom of ornithine (ORN) to produce L-citrulline. The protein is Ornithine carbamoyltransferase of Vibrio parahaemolyticus serotype O3:K6 (strain RIMD 2210633).